Here is a 430-residue protein sequence, read N- to C-terminus: Rho GTPase-activating protein 2 (430 aa).

The tract at residues 1–36 (MTGLVMMTKGGGCGGGGKGGRRKSTAEEEEEEEQNQ) is disordered. Over residues 9–18 (KGGGCGGGGK) the composition is skewed to gly residues. Positions 80–93 (IGWPTNVRHITHVT) constitute a CRIB domain. The Rho-GAP domain occupies 125-310 (VSAESMQCSY…TLAEREENAT (186 aa)). The tract at residues 307–372 (ENATGSEGYS…HLSRHSTHED (66 aa)) is disordered. Positions 316-326 (SPSHSSNSQTD) are enriched in low complexity. Residues 347–356 (ECGEEEEVEE) are compositionally biased toward acidic residues. Basic and acidic residues predominate over residues 357 to 371 (VEQHQEHLSRHSTHE).

Homodimerizes via its Rho-GAP domain and forms a tetrameric complex (2:2) with ARAC1/ROP3, ARAC2/ROP7, ARAC4/ROP2, ARAC5/ROP4, ARAC7/ROP9 or ARAC11/ROP1.

Functionally, acts as a GTPase activator for the Rac-type GTPase by converting it to an inactive GDP-bound state. The protein is Rho GTPase-activating protein 2 (ROPGAP2) of Arabidopsis thaliana (Mouse-ear cress).